A 305-amino-acid polypeptide reads, in one-letter code: Secreted mono- and diacylglycerol lipase A (305 aa).

The first 26 residues, 1-26 (MRLSFFTALSAVASLGYALPGKLQSR), serve as a signal peptide directing secretion. Intrachain disulfides connect C62/C67 and C129/C132. The active-site Nucleophile is S171. D225 serves as the catalytic Charge relay system. N251 carries N-linked (GlcNAc...) asparagine glycosylation. H285 serves as the catalytic Charge relay system. Positions 303 to 305 (KRV) are cleaved as a propeptide — removed in mature form.

Belongs to the AB hydrolase superfamily. Lipase family. Class 3 subfamily. Post-translationally, multiple forms of this lipase are due to the presence of different carbohydrates, which may contribute to the stability of this lipase but not to the enzyme activity.

The protein resides in the secreted. The enzyme catalyses a monoacylglycerol + H2O = glycerol + a fatty acid + H(+). It carries out the reaction a diacylglycerol + H2O = a monoacylglycerol + a fatty acid + H(+). Both Fe(3+) and Hg(2+) inhibit the activity significantly. Functionally, secreted lipase strictly specific to mono- and diacylglycerol, but not triacylglycerol. Hydrolyzes long-chain monoacylglycerols most efficiently with the highest activities observed on 1- and 3- monopalmitoyl-sn-glycerol or 1-monostearoyl-rac-glycerol. Prefers to attack alpha positions to beta positions of monoacylglycerol, but shows no stereospecificity on mono- and diacylglycerol. The chain is Secreted mono- and diacylglycerol lipase A from Penicillium camembertii.